The following is a 100-amino-acid chain: Urease subunit gamma (100 aa).

It belongs to the urease gamma subunit family. As to quaternary structure, heterotrimer of UreA (gamma), UreB (beta) and UreC (alpha) subunits. Three heterotrimers associate to form the active enzyme.

Its subcellular location is the cytoplasm. It catalyses the reaction urea + 2 H2O + H(+) = hydrogencarbonate + 2 NH4(+). The protein operates within nitrogen metabolism; urea degradation; CO(2) and NH(3) from urea (urease route): step 1/1. This is Urease subunit gamma from Prochlorococcus marinus (strain NATL1A).